The chain runs to 456 residues: RuvB-like helicase 1 (456 aa).

70–77 (GPPGTGKT) contacts ATP.

The protein belongs to the RuvB family. As to quaternary structure, forms homohexameric rings. May form a dodecamer with rept made of two stacked hexameric rings. Component of the chromatin remodeling Ino80 complex.

The protein localises to the nucleus. The catalysed reaction is ATP + H2O = ADP + phosphate + H(+). Functionally, acts as a transcriptional coactivator in Wg signaling. Proposed core component of the chromatin remodeling Ino80 complex which is involved in transcriptional regulation, DNA replication and probably DNA repair. This Aedes aegypti (Yellowfever mosquito) protein is RuvB-like helicase 1.